The primary structure comprises 116 residues: Large ribosomal subunit protein bL17 (116 aa).

It belongs to the bacterial ribosomal protein bL17 family. Part of the 50S ribosomal subunit. Contacts protein L32.

The polypeptide is Large ribosomal subunit protein bL17 (Microcystis aeruginosa (strain NIES-843 / IAM M-2473)).